We begin with the raw amino-acid sequence, 195 residues long: MEDIVIATNNQGKINDFKAIFKNQNVIGISELIEDFDVEETGATFEENAKLKSEAAAHALNKRVIADDSGLEVFALNGEPGVYSARYAGLGKNDEDNIEKLLTNLEDVQDRRAQFVCVISMSAPNEKTKTFKGTVSGVITTERHGKNGFGYDPIFFVPELNKTMAEITNDEKGKISHRGNAILLLKEYLEGEQHV.

8–13 lines the substrate pocket; it reads TNNQGK. Residues Glu39 and Asp68 each contribute to the Mg(2+) site. Residue Asp68 is the Proton acceptor of the active site. Substrate-binding positions include Ser69, 149–152, Lys172, and 177–178; these read FGYD and HR.

The protein belongs to the HAM1 NTPase family. As to quaternary structure, homodimer. The cofactor is Mg(2+).

The enzyme catalyses XTP + H2O = XMP + diphosphate + H(+). It carries out the reaction dITP + H2O = dIMP + diphosphate + H(+). It catalyses the reaction ITP + H2O = IMP + diphosphate + H(+). Its function is as follows. Pyrophosphatase that catalyzes the hydrolysis of nucleoside triphosphates to their monophosphate derivatives, with a high preference for the non-canonical purine nucleotides XTP (xanthosine triphosphate), dITP (deoxyinosine triphosphate) and ITP. Seems to function as a house-cleaning enzyme that removes non-canonical purine nucleotides from the nucleotide pool, thus preventing their incorporation into DNA/RNA and avoiding chromosomal lesions. This is dITP/XTP pyrophosphatase from Staphylococcus epidermidis (strain ATCC 35984 / DSM 28319 / BCRC 17069 / CCUG 31568 / BM 3577 / RP62A).